A 308-amino-acid chain; its full sequence is Ribosome maturation factor RimP (308 aa).

3 disordered regions span residues 1–31, 94–113, and 249–308; these read MARA…AADA, EDIG…AAGG, and DLDE…EMNR. A compositionally biased stretch (low complexity) spans 17–31; it reads APSRRTGGARAAADA. Residues 99 to 113 are compositionally biased toward gly residues; it reads DGAGGTGGSGGAAGG. Positions 249–269 are enriched in acidic residues; the sequence is DLDEGLEDDDGLEDEDDEDEY.

This sequence belongs to the RimP family.

It localises to the cytoplasm. Functionally, required for maturation of 30S ribosomal subunits. The chain is Ribosome maturation factor RimP from Parafrankia sp. (strain EAN1pec).